The primary structure comprises 220 residues: 7-cyano-7-deazaguanine synthase (220 aa).

7–17 (LSGGLDSAVCL) contacts ATP. 4 residues coordinate Zn(2+): cysteine 191, cysteine 199, cysteine 202, and cysteine 205.

This sequence belongs to the QueC family. Homodimer. It depends on Zn(2+) as a cofactor.

It catalyses the reaction 7-carboxy-7-deazaguanine + NH4(+) + ATP = 7-cyano-7-deazaguanine + ADP + phosphate + H2O + H(+). The protein operates within purine metabolism; 7-cyano-7-deazaguanine biosynthesis. Catalyzes the ATP-dependent conversion of 7-carboxy-7-deazaguanine (CDG) to 7-cyano-7-deazaguanine (preQ(0)). The protein is 7-cyano-7-deazaguanine synthase of Desulforudis audaxviator (strain MP104C).